The primary structure comprises 238 residues: Survival of motor neuron-related-splicing factor 30 (238 aa).

One can recognise a Tudor domain in the interval 72 to 132 (SWKVGDKCMA…KPVEEGRKAK (61 aa)). Residues 142–160 (KKEMIAQQREYKKKKALKK) carry the Nuclear localization signal motif. Position 201 is a phosphoserine (serine 201). The residue at position 219 (lysine 219) is an N6-acetyllysine.

This sequence belongs to the SMN family. In terms of assembly, associates with spliceosomes. Associates with U4/U5/U6 tri-snRNP and with U2 snRNP.

It is found in the nucleus speckle. The protein resides in the nucleus. The protein localises to the cajal body. In terms of biological role, involved in spliceosome assembly. The polypeptide is Survival of motor neuron-related-splicing factor 30 (SMNDC1) (Bos taurus (Bovine)).